Here is a 107-residue protein sequence, read N- to C-terminus: Probable antitoxin TacA (107 aa).

The protein belongs to the TacA antitoxin family. In terms of assembly, forms a complex with cognate antitoxin TacT.

Probable antitoxin component of a type II toxin-antitoxin (TA) system. Should neutralize cognate toxin TacT (y4aS). The sequence is that of Probable antitoxin TacA from Sinorhizobium fredii (strain NBRC 101917 / NGR234).